The primary structure comprises 859 residues: Rod cGMP-specific 3',5'-cyclic phosphodiesterase subunit alpha (859 aa).

Gly-2 is modified (N-acetylglycine). GAF domains lie at 73–222 (QAEK…NLIM) and 254–431 (DIER…GWSV). Residues 483 to 816 (EEEELAEILQ…KEWKALADEY (334 aa)) form the PDEase domain. His-559 functions as the Proton donor in the catalytic mechanism. A divalent metal cation is bound by residues His-563, His-599, Asp-600, and Asp-720. The tract at residues 823–859 (LEEEKQKQQAAKQAASGNQPGGNPLQGAPASKSCCIQ) is disordered. Cys-856 carries the post-translational modification Cysteine methyl ester. A lipid anchor (S-farnesyl cysteine) is attached at Cys-856. The propeptide at 857–859 (CIQ) is removed in mature form.

This sequence belongs to the cyclic nucleotide phosphodiesterase family. In terms of assembly, oligomer composed of two catalytic chains (alpha and beta), an inhibitory chain (gamma) and the delta chain. Requires a divalent metal cation as cofactor.

The protein localises to the cell membrane. It is found in the cell projection. It localises to the cilium. The protein resides in the photoreceptor outer segment. The catalysed reaction is 3',5'-cyclic GMP + H2O = GMP + H(+). Rod-specific cGMP phosphodiesterase that catalyzes the hydrolysis of 3',5'-cyclic GMP. This protein participates in processes of transmission and amplification of the visual signal. In Mus musculus (Mouse), this protein is Rod cGMP-specific 3',5'-cyclic phosphodiesterase subunit alpha.